An 887-amino-acid chain; its full sequence is Pyruvate dehydrogenase E1 component (887 aa).

Residues D231, N261, and Q263 each contribute to the Mg(2+) site. The residue at position 716 (K716) is an N6-acetyllysine.

In terms of assembly, homodimer. Part of the PDH complex, consisting of multiple copies of pyruvate dehydrogenase (E1), dihydrolipoamide acetyltransferase (E2) and lipoamide dehydrogenase (E3). Mg(2+) is required as a cofactor. The cofactor is thiamine diphosphate.

The enzyme catalyses N(6)-[(R)-lipoyl]-L-lysyl-[protein] + pyruvate + H(+) = N(6)-[(R)-S(8)-acetyldihydrolipoyl]-L-lysyl-[protein] + CO2. In terms of biological role, component of the pyruvate dehydrogenase (PDH) complex, that catalyzes the overall conversion of pyruvate to acetyl-CoA and CO(2). This Escherichia coli O157:H7 protein is Pyruvate dehydrogenase E1 component (aceE).